The following is a 372-amino-acid chain: METKKTLREGYTTGLCAAAATKAALTALITGQVQTDATIRIPIGRVVTFSLASCSFDGETATASVVKDGGDDPDATHGALIVSTVSWASSPGVHIDGGEGVGRVTKPGLPVPVGEAAINPVPRQMIHEAVNEVLAQYGLHRGVNVVISVPGGEEIAKKTLNPRLGIMGGISILGTRGIVVPFSTAAYRASIVQALQVAKANGCRHVVITTGGRSEKYAMQEYPHLPEEAFIEMGDFVGFTLKQCKRLGIKMVSMVGMMGKFSKVAQGVMMVHSKSAPVDFGFLAALAEQAGASSALVAAVRGANTAAQVGDMMQEAGCMKFFELLCEACCQAALHEVGGGLTVATSIYTMNGQQLGKAVQTDGDDEVDRCGC.

Belongs to the CbiD family.

It catalyses the reaction Co-precorrin-5B + S-adenosyl-L-methionine = Co-precorrin-6A + S-adenosyl-L-homocysteine. It functions in the pathway cofactor biosynthesis; adenosylcobalamin biosynthesis; cob(II)yrinate a,c-diamide from sirohydrochlorin (anaerobic route): step 6/10. Its function is as follows. Catalyzes the methylation of C-1 in cobalt-precorrin-5B to form cobalt-precorrin-6A. In Geobacillus thermodenitrificans (strain NG80-2), this protein is Cobalt-precorrin-5B C(1)-methyltransferase.